We begin with the raw amino-acid sequence, 270 residues long: Putative serine acetyltransferase (270 aa).

This sequence belongs to the transferase hexapeptide repeat family.

It localises to the cytoplasm. The protein localises to the nucleus. It carries out the reaction L-serine + acetyl-CoA = O-acetyl-L-serine + CoA. The protein operates within amino-acid biosynthesis; L-cysteine biosynthesis; L-cysteine from L-serine: step 1/2. The polypeptide is Putative serine acetyltransferase (Schizosaccharomyces pombe (strain 972 / ATCC 24843) (Fission yeast)).